A 174-amino-acid chain; its full sequence is Large ribosomal subunit protein uL10 (174 aa).

It belongs to the universal ribosomal protein uL10 family. Part of the ribosomal stalk of the 50S ribosomal subunit. The N-terminus interacts with L11 and the large rRNA to form the base of the stalk. The C-terminus forms an elongated spine to which L12 dimers bind in a sequential fashion forming a multimeric L10(L12)X complex.

Forms part of the ribosomal stalk, playing a central role in the interaction of the ribosome with GTP-bound translation factors. This is Large ribosomal subunit protein uL10 from Vesicomyosocius okutanii subsp. Calyptogena okutanii (strain HA).